The sequence spans 129 residues: EFLLTKIGRQQGRPLTVTDSAIRLLMSHRWPGNVRDVENCLERSAIMSEDGTITRDVVSLTGVDNESPPLAAPLPEVNLADENLDDRERVIAALEQAGWVQAKAARLLGMTPRQIAYRIQTLNIHMRKI.

One can recognise a Sigma-54 factor interaction domain in the interval 1–46 (EFLLTKIGRQQGRPLTVTDSAIRLLMSHRWPGNVRDVENCLERSAI). Residues 101-129 (QAKAARLLGMTPRQIAYRIQTLNIHMRKI) constitute a DNA-binding region (H-T-H motif).

Interacts with sigma-54.

In terms of biological role, required for activation of most nif operons, which are directly involved in nitrogen fixation. In Azotobacter chroococcum mcd 1, this protein is Nif-specific regulatory protein (nifA).